The primary structure comprises 516 residues: Apolipoprotein N-acyltransferase (516 aa).

The next 5 membrane-spanning stretches (helical) occupy residues 23 to 43 (ILILLLAAALAGAFTLFAFAP), 68 to 88 (AFWLGYAWGLGAYVSNFRWIY), 94 to 114 (VAGLPAWIAAPLVLLLPAYLA), 135 to 155 (WLLAFPAAWELGEWLRGWVMT), and 178 to 198 (LGGIHLVNYLVALSAAALAML). In terms of domain architecture, CN hydrolase spans 241–481 (AQGNIAQELK…VLTGFAQSRQ (241 aa)). The active-site Proton acceptor is Glu-279. Lys-339 is an active-site residue. Catalysis depends on Cys-391, which acts as the Nucleophile. Residues 489–509 (FGNLPVVLGCGALLLLALLLG) traverse the membrane as a helical segment.

It belongs to the CN hydrolase family. Apolipoprotein N-acyltransferase subfamily.

It localises to the cell inner membrane. It carries out the reaction N-terminal S-1,2-diacyl-sn-glyceryl-L-cysteinyl-[lipoprotein] + a glycerophospholipid = N-acyl-S-1,2-diacyl-sn-glyceryl-L-cysteinyl-[lipoprotein] + a 2-acyl-sn-glycero-3-phospholipid + H(+). It participates in protein modification; lipoprotein biosynthesis (N-acyl transfer). Functionally, catalyzes the phospholipid dependent N-acylation of the N-terminal cysteine of apolipoprotein, the last step in lipoprotein maturation. The sequence is that of Apolipoprotein N-acyltransferase from Chromobacterium violaceum (strain ATCC 12472 / DSM 30191 / JCM 1249 / CCUG 213 / NBRC 12614 / NCIMB 9131 / NCTC 9757 / MK).